Consider the following 478-residue polypeptide: Light-independent protochlorophyllide reductase subunit N (478 aa).

[4Fe-4S] cluster contacts are provided by Cys-22, Cys-47, and Cys-107.

The protein belongs to the BchN/ChlN family. Protochlorophyllide reductase is composed of three subunits; ChlL, ChlN and ChlB. Forms a heterotetramer of two ChlB and two ChlN subunits. The cofactor is [4Fe-4S] cluster.

The protein localises to the plastid. Its subcellular location is the chloroplast. The enzyme catalyses chlorophyllide a + oxidized 2[4Fe-4S]-[ferredoxin] + 2 ADP + 2 phosphate = protochlorophyllide a + reduced 2[4Fe-4S]-[ferredoxin] + 2 ATP + 2 H2O. It functions in the pathway porphyrin-containing compound metabolism; chlorophyll biosynthesis (light-independent). Component of the dark-operative protochlorophyllide reductase (DPOR) that uses Mg-ATP and reduced ferredoxin to reduce ring D of protochlorophyllide (Pchlide) to form chlorophyllide a (Chlide). This reaction is light-independent. The NB-protein (ChlN-ChlB) is the catalytic component of the complex. The sequence is that of Light-independent protochlorophyllide reductase subunit N from Chlorokybus atmophyticus (Soil alga).